The following is a 260-amino-acid chain: Ribosomal RNA small subunit methyltransferase J (260 aa).

S-adenosyl-L-methionine is bound by residues 125–126 (ER) and aspartate 179. The disordered stretch occupies residues 234–260 (IDGPKPSHALDGKSSRYDIYPKKALKP). Over residues 241 to 254 (HALDGKSSRYDIYP) the composition is skewed to basic and acidic residues.

The protein belongs to the methyltransferase superfamily. RsmJ family.

It localises to the cytoplasm. The enzyme catalyses guanosine(1516) in 16S rRNA + S-adenosyl-L-methionine = N(2)-methylguanosine(1516) in 16S rRNA + S-adenosyl-L-homocysteine + H(+). Specifically methylates the guanosine in position 1516 of 16S rRNA. This Pseudomonas fluorescens (strain SBW25) protein is Ribosomal RNA small subunit methyltransferase J.